Consider the following 136-residue polypeptide: Nucleoside diphosphate kinase (136 aa).

Residues K10, F58, R86, T92, R104, and N114 each coordinate ATP. The active-site Pros-phosphohistidine intermediate is the H117.

The protein belongs to the NDK family. In terms of assembly, homotetramer. It depends on Mg(2+) as a cofactor.

It is found in the cytoplasm. The enzyme catalyses a 2'-deoxyribonucleoside 5'-diphosphate + ATP = a 2'-deoxyribonucleoside 5'-triphosphate + ADP. The catalysed reaction is a ribonucleoside 5'-diphosphate + ATP = a ribonucleoside 5'-triphosphate + ADP. In terms of biological role, major role in the synthesis of nucleoside triphosphates other than ATP. The ATP gamma phosphate is transferred to the NDP beta phosphate via a ping-pong mechanism, using a phosphorylated active-site intermediate. The polypeptide is Nucleoside diphosphate kinase (Mycobacterium avium (strain 104)).